The primary structure comprises 230 residues: RNA chaperone ProQ (230 aa).

Residues 104–176 (AEAKARVQAQ…APRQNTEKLT (73 aa)) are disordered. Residues 115–132 (AEQRAKKREAEGDKETSK) show a composition bias toward basic and acidic residues.

This sequence belongs to the ProQ family.

The protein localises to the cytoplasm. RNA chaperone with significant RNA binding, RNA strand exchange and RNA duplexing activities. May regulate ProP activity through an RNA-based, post-transcriptional mechanism. The chain is RNA chaperone ProQ from Proteus mirabilis (strain HI4320).